A 993-amino-acid chain; its full sequence is Vinculin (993 aa).

2 repeat units span residues 258–364 (DSDN…TKEI) and 373–480 (TNTQ…ELVD). The segment at 258–480 (DSDNVTVMRK…LRNKLRELVD (223 aa)) is 2 X repeats. Positions 730–797 (ITGAGGSRPP…PPPETDDEEE (68 aa)) are disordered. The span at 758–768 (VHDRIYIREDI) shows a compositional bias: basic and acidic residues. Over residues 769–790 (PTPPRPPPPVEISPPPRPPPPP) the composition is skewed to pro residues.

The protein belongs to the vinculin/alpha-catenin family. Exhibits self-association properties.

It is found in the cytoplasm. It localises to the cytoskeleton. The protein resides in the cell junction. Its subcellular location is the adherens junction. The protein localises to the cell membrane. Functionally, involved in cell adhesion. May be involved in the attachment of the actin-based microfilaments to the plasma membrane. The sequence is that of Vinculin from Brugia malayi (Filarial nematode worm).